An 806-amino-acid polypeptide reads, in one-letter code: Minor extracellular protease Vpr (806 aa).

The N-terminal stretch at 1–28 (MKKGIIRFLLVSFVLFFALSTGITGVQA) is a signal peptide. A propeptide spanning residues 29 to 160 (APASSKTSAD…TISEDAVSPQ (132 aa)) is cleaved from the precursor. One can recognise an Inhibitor I9 domain in the interval 57 to 142 (TVIVELKEKS…AVYPNVTYKT (86 aa)). The Peptidase S8 domain maps to 158–597 (SPQMDDSAPY…ARIMNAIKAD (440 aa)). Residues Asp189 and His233 each act as charge relay system in the active site. In terms of domain architecture, PA spans 383–461 (ELVEAGIGEA…KLSLEDGEKL (79 aa)). Ser534 functions as the Charge relay system in the catalytic mechanism.

This sequence belongs to the peptidase S8 family. Probably undergoes C-terminal processing or proteolysis. Auto-processed to form active enzymes of several different molecular weights.

The protein resides in the secreted. It is found in the cell wall. Activity is inhibited by phenylmethylsulfonyl fluoride (PMSF), but not by EDTA. In terms of biological role, serine protease. Involved in the production of the competence and sporulation stimulating factor CSF. Is directly involved in the processing of pro-CSF to CSF. Can also cleave pro-PhrA to PhrA, but cannot cleave pro-PhrE. Shows fibrinolytic activity in vitro. Not essential for growth or sporulation. The sequence is that of Minor extracellular protease Vpr from Bacillus subtilis (strain 168).